We begin with the raw amino-acid sequence, 302 residues long: MASSGAARPAASRVLQRCQPFSSSTSCAAPVTTWRTLARPSTAAATAQATTQQLRLLSISMPLQKRRTTRDNNRLRGQSTIHRSGIRRPLSVSEEDIPQPVQDEGVGKMREEDTDPDHGLWGFFYDKQLVPTPKQLSAHGRSWTVQELRGKSWEDLHALWWMCCRERNRIATAIRTRQFIGIKKDNPFDEAEARGRTVNKTMQAIKHVLTERFYAWEDARKLAMEDPEINLSGKGPIYTPSLHFESADTSSYIEEPVADHLETPETSGQEKVGELSPAGAVDPSTILASKTGKPVTDAPRSS.

The transit peptide at Met-1–Ala-38 directs the protein to the mitochondrion. The segment at Glu-255 to Ser-302 is disordered.

It belongs to the universal ribosomal protein uL29 family. As to quaternary structure, component of the mitochondrial large ribosomal subunit. Mature mitochondrial ribosomes consist of a small (37S) and a large (54S) subunit. The 37S subunit contains at least 33 different proteins and 1 molecule of RNA (15S). The 54S subunit contains at least 45 different proteins and 1 molecule of RNA (21S).

It localises to the mitochondrion. The sequence is that of Large ribosomal subunit protein uL29m (MRPL4) from Pyricularia oryzae (strain 70-15 / ATCC MYA-4617 / FGSC 8958) (Rice blast fungus).